The sequence spans 461 residues: MKKILVVGDLIADYYLWGKSERLSPEAPVPVLEVQKENKNLGGAANVANNLISLKAKVFLCGVVGDDLEGKHFLNALKARNIDTSGILTDKTRCTTLKTRIIAQNQQIVRVDKEIKDPLNADLRKRLLDFFTEKIQEIDGVILSDYNKGVLDFELTQTMIALANQHHKLILCDPKGKDYSKYSHASLITPNRAELEHALHLKLDSHANLSKALQILKETYQIAMPLVTLSEQGIAFLEKGELVNCPTIAKEVYDVTGAGDTVIASLTLSLLELMSLKDACEFANAAAAVVVGKMGSALASLEEIALILNQTHPKILPLEKLLETLDQQKIVFTNGCFDLLHKGHASYLQKAKALGDILIVGLNSDNSVKRLKGDKRPIVSEKDRAFLLASLSCVDYVVVFEEDTPIKLIQALKPDILVKGADYLNKEVIGSEFAKETCLMEFEEGYSTSAIIEKIKRTHND.

Residues 1–311 (MKKILVVGDL…EEIALILNQT (311 aa)) are ribokinase. 191-194 (NRAE) serves as a coordination point for ATP. Residue Asp260 is part of the active site. The interval 332 to 461 (FTNGCFDLLH…IEKIKRTHND (130 aa)) is cytidylyltransferase.

The protein in the N-terminal section; belongs to the carbohydrate kinase PfkB family. It in the C-terminal section; belongs to the cytidylyltransferase family. In terms of assembly, homodimer.

It carries out the reaction D-glycero-beta-D-manno-heptose 7-phosphate + ATP = D-glycero-beta-D-manno-heptose 1,7-bisphosphate + ADP + H(+). The enzyme catalyses D-glycero-beta-D-manno-heptose 1-phosphate + ATP + H(+) = ADP-D-glycero-beta-D-manno-heptose + diphosphate. It functions in the pathway nucleotide-sugar biosynthesis; ADP-L-glycero-beta-D-manno-heptose biosynthesis; ADP-L-glycero-beta-D-manno-heptose from D-glycero-beta-D-manno-heptose 7-phosphate: step 1/4. The protein operates within nucleotide-sugar biosynthesis; ADP-L-glycero-beta-D-manno-heptose biosynthesis; ADP-L-glycero-beta-D-manno-heptose from D-glycero-beta-D-manno-heptose 7-phosphate: step 3/4. Catalyzes the phosphorylation of D-glycero-D-manno-heptose 7-phosphate at the C-1 position to selectively form D-glycero-beta-D-manno-heptose-1,7-bisphosphate. Functionally, catalyzes the ADP transfer from ATP to D-glycero-beta-D-manno-heptose 1-phosphate, yielding ADP-D-glycero-beta-D-manno-heptose. The polypeptide is Bifunctional protein HldE (Helicobacter pylori (strain P12)).